Here is a 346-residue protein sequence, read N- to C-terminus: tRNA N6-adenosine threonylcarbamoyltransferase (346 aa).

A divalent metal cation-binding residues include H120, H124, and Y141. Substrate is bound by residues Y141–G145, D173, G188, E192, and N277. D305 contacts a divalent metal cation.

Belongs to the KAE1 / TsaD family. Component of the EKC/KEOPS complex composed of at least BUD32, CGI121, GON7, KAE1 and PCC1; the whole complex dimerizes. A divalent metal cation is required as a cofactor.

It localises to the cytoplasm. Its subcellular location is the nucleus. It catalyses the reaction L-threonylcarbamoyladenylate + adenosine(37) in tRNA = N(6)-L-threonylcarbamoyladenosine(37) in tRNA + AMP + H(+). Component of the EKC/KEOPS complex that is required for the formation of a threonylcarbamoyl group on adenosine at position 37 (t(6)A37) in tRNAs that read codons beginning with adenine. The complex is probably involved in the transfer of the threonylcarbamoyl moiety of threonylcarbamoyl-AMP (TC-AMP) to the N6 group of A37. KAE1 likely plays a direct catalytic role in this reaction, but requires other protein(s) of the complex to fulfill this activity. The EKC/KEOPS complex also promotes both telomere uncapping and telomere elongation. The complex is required for efficient recruitment of transcriptional coactivators. The polypeptide is tRNA N6-adenosine threonylcarbamoyltransferase (Gibberella zeae (strain ATCC MYA-4620 / CBS 123657 / FGSC 9075 / NRRL 31084 / PH-1) (Wheat head blight fungus)).